A 195-amino-acid chain; its full sequence is Small ribosomal subunit protein uS7 (195 aa).

Belongs to the universal ribosomal protein uS7 family. As to quaternary structure, part of the 30S ribosomal subunit.

Its function is as follows. One of the primary rRNA binding proteins, it binds directly to 16S rRNA where it nucleates assembly of the head domain of the 30S subunit. Is located at the subunit interface close to the decoding center. This is Small ribosomal subunit protein uS7 from Sulfolobus acidocaldarius (strain ATCC 33909 / DSM 639 / JCM 8929 / NBRC 15157 / NCIMB 11770).